The following is a 370-amino-acid chain: Uroporphyrinogen decarboxylase (370 aa).

Substrate contacts are provided by residues 29-33, aspartate 79, tyrosine 155, serine 210, and histidine 342; that span reads RQAGR.

It belongs to the uroporphyrinogen decarboxylase family. Homodimer.

It localises to the cytoplasm. It carries out the reaction uroporphyrinogen III + 4 H(+) = coproporphyrinogen III + 4 CO2. It participates in porphyrin-containing compound metabolism; protoporphyrin-IX biosynthesis; coproporphyrinogen-III from 5-aminolevulinate: step 4/4. Functionally, catalyzes the decarboxylation of four acetate groups of uroporphyrinogen-III to yield coproporphyrinogen-III. The protein is Uroporphyrinogen decarboxylase of Delftia acidovorans (strain DSM 14801 / SPH-1).